Consider the following 195-residue polypeptide: Rubrerythrin-1 (195 aa).

Positions serine 3 to lysine 150 constitute a Ferritin-like diiron domain. Glutamate 20, glutamate 53, glutamate 98, glutamate 101, glutamate 132, histidine 135, cysteine 162, cysteine 165, cysteine 178, and cysteine 181 together coordinate Fe(3+). The Rubredoxin-like domain maps to valine 157 to leucine 191.

In terms of assembly, homodimer. Fe(3+) is required as a cofactor.

It catalyses the reaction H2O2 + NADH + H(+) = NAD(+) + 2 H2O. Its activity is regulated as follows. Rubredoxin (Rd) increases the NADH consumption rate by serving as an intermediary electron-transfer shuttle between NROR and RubY. In terms of biological role, functions as the terminal component of an NADH peroxidase (NADH:H(2)O(2) oxidoreductase) when using NADH:rubredoxin oxidoreductase (NROR) as the electron transport intermediary from NADH to RubY. The polypeptide is Rubrerythrin-1 (rbr1) (Clostridium acetobutylicum (strain ATCC 824 / DSM 792 / JCM 1419 / IAM 19013 / LMG 5710 / NBRC 13948 / NRRL B-527 / VKM B-1787 / 2291 / W)).